A 383-amino-acid polypeptide reads, in one-letter code: Succinyl-diaminopimelate desuccinylase (383 aa).

H79 is a Zn(2+) binding site. The active site involves D81. D110 contributes to the Zn(2+) binding site. The active-site Proton acceptor is E141. Zn(2+)-binding residues include E142, E170, and H355.

It belongs to the peptidase M20A family. DapE subfamily. As to quaternary structure, homodimer. Zn(2+) is required as a cofactor. The cofactor is Co(2+).

It carries out the reaction N-succinyl-(2S,6S)-2,6-diaminopimelate + H2O = (2S,6S)-2,6-diaminopimelate + succinate. It participates in amino-acid biosynthesis; L-lysine biosynthesis via DAP pathway; LL-2,6-diaminopimelate from (S)-tetrahydrodipicolinate (succinylase route): step 3/3. Its function is as follows. Catalyzes the hydrolysis of N-succinyl-L,L-diaminopimelic acid (SDAP), forming succinate and LL-2,6-diaminopimelate (DAP), an intermediate involved in the bacterial biosynthesis of lysine and meso-diaminopimelic acid, an essential component of bacterial cell walls. This Helicobacter pylori (strain ATCC 700392 / 26695) (Campylobacter pylori) protein is Succinyl-diaminopimelate desuccinylase.